Here is a 205-residue protein sequence, read N- to C-terminus: Large ribosomal subunit protein uL4 (205 aa).

This sequence belongs to the universal ribosomal protein uL4 family. As to quaternary structure, part of the 50S ribosomal subunit.

One of the primary rRNA binding proteins, this protein initially binds near the 5'-end of the 23S rRNA. It is important during the early stages of 50S assembly. It makes multiple contacts with different domains of the 23S rRNA in the assembled 50S subunit and ribosome. In terms of biological role, forms part of the polypeptide exit tunnel. In Dinoroseobacter shibae (strain DSM 16493 / NCIMB 14021 / DFL 12), this protein is Large ribosomal subunit protein uL4.